A 347-amino-acid polypeptide reads, in one-letter code: Anthranilate phosphoribosyltransferase (347 aa).

5-phospho-alpha-D-ribose 1-diphosphate is bound by residues G88, G91–D92, T96, N98–T101, K116–S124, and S128. G88 is an anthranilate binding site. Residue S100 coordinates Mg(2+). N119 is an anthranilate binding site. Residue R174 participates in anthranilate binding. 2 residues coordinate Mg(2+): D232 and E233.

This sequence belongs to the anthranilate phosphoribosyltransferase family. In terms of assembly, homodimer. Requires Mg(2+) as cofactor.

It catalyses the reaction N-(5-phospho-beta-D-ribosyl)anthranilate + diphosphate = 5-phospho-alpha-D-ribose 1-diphosphate + anthranilate. It functions in the pathway amino-acid biosynthesis; L-tryptophan biosynthesis; L-tryptophan from chorismate: step 2/5. In terms of biological role, catalyzes the transfer of the phosphoribosyl group of 5-phosphorylribose-1-pyrophosphate (PRPP) to anthranilate to yield N-(5'-phosphoribosyl)-anthranilate (PRA). The sequence is that of Anthranilate phosphoribosyltransferase from Shewanella sp. (strain MR-4).